The primary structure comprises 163 residues: Anthranilate 1,2-dioxygenase small subunit (163 aa).

This sequence belongs to the bacterial ring-hydroxylating dioxygenase beta subunit family. The anthranilate dioxygenase (AntDO) multicomponent enzyme system is composed of an oxygenase component and a NADH:acceptor reductase component (AntC). The oxygenase component is a heterohexamer of 3 large (AntA) and 3 small (AntB) subunits.

It carries out the reaction anthranilate + NADH + O2 + 3 H(+) = catechol + NH4(+) + CO2 + NAD(+). The catalysed reaction is anthranilate + NADPH + O2 + 3 H(+) = catechol + NH4(+) + CO2 + NADP(+). It functions in the pathway aromatic compound metabolism; anthranilate degradation via hydroxylation; catechol from anthranilate: step 1/1. In terms of biological role, component of anthranilate dioxygenase multicomponent enzyme system which catalyzes the incorporation of both atoms of molecular oxygen into anthranilate to form catechol. The polypeptide is Anthranilate 1,2-dioxygenase small subunit (Acinetobacter baylyi (strain ATCC 33305 / BD413 / ADP1)).